Here is a 597-residue protein sequence, read N- to C-terminus: Elongation factor 4 (597 aa).

Residues 4–181 enclose the tr-type G domain; it reads SKIRNFSIIA…AIVDYVPAPK (178 aa). Residues 16–21 and 128–131 each bind GTP; these read DHGKST and NKID.

The protein belongs to the TRAFAC class translation factor GTPase superfamily. Classic translation factor GTPase family. LepA subfamily.

It is found in the cell membrane. It carries out the reaction GTP + H2O = GDP + phosphate + H(+). In terms of biological role, required for accurate and efficient protein synthesis under certain stress conditions. May act as a fidelity factor of the translation reaction, by catalyzing a one-codon backward translocation of tRNAs on improperly translocated ribosomes. Back-translocation proceeds from a post-translocation (POST) complex to a pre-translocation (PRE) complex, thus giving elongation factor G a second chance to translocate the tRNAs correctly. Binds to ribosomes in a GTP-dependent manner. The chain is Elongation factor 4 from Mycoplasmopsis agalactiae (strain NCTC 10123 / CIP 59.7 / PG2) (Mycoplasma agalactiae).